The chain runs to 122 residues: Large ribosomal subunit protein uL14 (122 aa).

Belongs to the universal ribosomal protein uL14 family. As to quaternary structure, part of the 50S ribosomal subunit. Forms a cluster with proteins L3 and L19. In the 70S ribosome, L14 and L19 interact and together make contacts with the 16S rRNA in bridges B5 and B8.

Binds to 23S rRNA. Forms part of two intersubunit bridges in the 70S ribosome. The protein is Large ribosomal subunit protein uL14 of Geobacter sulfurreducens (strain ATCC 51573 / DSM 12127 / PCA).